The chain runs to 598 residues: MQVPQLLVLFGSQTGTAQDEAERLGREARRRRLGCRVQALDSYSVANLIREPLVIFVCATTGQGDPPDNMKNFWRFIFRKSLPSSSLCQMDFAVLGLGDSSYAKFNFVAKKLHRRLLQLGGSALLPPCLGDDQHELGPDAAIDPWVGDLWEKIMVMYPVPLDIPEIPHGVPLPSKFIFQFLQEVPSIGAEELNIASSAPQTPPSELQPFLAPVITNQRVTGPQHFQDVRLIEFDITDSNISFAAGDVVFILPSNSEAHTQQFCQVLCLDPNQFFTLKPREPGVPDPPGLPQPCTVWNLVSQYLDIASVPRRSFFELLACLSQHALEREKLLELSSARGQEELWEYCSRPRRTILEVLCDFPHTAGAIPPDYLLDLIPRIRPRAFSIASSLLAHPRRLQILVAVVKYQTRLKEPRHGLCSSWLASLNPGQAGPVRVPLWVRPGSLVFPKTPDTPIIMVGAGTGVAPFRAAIQERVAHGQTGNFLFFGCRQRDQDFYWQTEWQKLEQKGWLTLVTAFSREQEQKVYVQHRLRELGPLVWELLDGQGAYFYLAGNAKYLPTDVSEALMSIFQEEGRLSTADASAYLARLQQTLRFQTETWA.

Residues 6–150 enclose the Flavodoxin-like domain; the sequence is LLVLFGSQTG…AIDPWVGDLW (145 aa). Residues 12-17, 59-62, 97-106, and Asp132 each bind FMN; these read SQTGTA, ATTG, and LGDSSYAKFN. The FAD-binding FR-type domain occupies 206–448; it reads LQPFLAPVIT…VRPGSLVFPK (243 aa). FAD is bound by residues Arg350, 382–385, and 416–419; these read RAFS and GLCS. NADP(+) contacts are provided by residues Thr461, 516–517, 522–526, and Asp559; these read SR and KVYVQ. Trp597 serves as a coordination point for FAD.

The protein belongs to the NADPH-dependent diflavin oxidoreductase NDOR1 family. It in the N-terminal section; belongs to the flavodoxin family. This sequence in the C-terminal section; belongs to the flavoprotein pyridine nucleotide cytochrome reductase family. Interacts with CIAPIN1; as part of the cytosolic iron-sulfur (Fe-S) protein assembly (CIA) machinery. Interacts with DCPS. The cofactor is FAD. It depends on FMN as a cofactor.

It is found in the cytoplasm. Its subcellular location is the perinuclear region. The catalysed reaction is 2 oxidized [2Fe-2S]-[protein] + NADPH = 2 reduced [2Fe-2S]-[protein] + NADP(+) + H(+). Its function is as follows. NADPH-dependent reductase which is a central component of the cytosolic iron-sulfur (Fe-S) protein assembly (CIA) machinery. Transfers electrons from NADPH via its FAD and FMN prosthetic groups to the [2Fe-2S] cluster of CIAPIN1, another key component of the CIA machinery. In turn, this reduced cluster provides electrons for assembly of cytosolic iron-sulfur cluster proteins. It can also reduce the [2Fe-2S] cluster of CISD1 and activate this protein implicated in Fe/S cluster repair. In vitro can fully activate methionine synthase/MTR in the presence of soluble cytochrome b5/CYB5A. The protein is NADPH-dependent diflavin oxidoreductase 1 of Mus musculus (Mouse).